The following is a 280-amino-acid chain: F-box only protein 27 (280 aa).

The region spanning 20-67 is the F-box domain; it reads VLDLSRLPPELLLLVLSHVPPRTLLMHCRRVCRAWRALVDGQALWLLL. The FBA domain maps to 101–277; it reads FCALRPLGRN…VTNSSVIIRV (177 aa).

As to quaternary structure, part of a SCF (SKP1-cullin-F-box) protein ligase complex. Interacts with SKP1 and CUL1. As to expression, detected in brain, heart and muscle.

Substrate-recognition component of the SCF (SKP1-CUL1-F-box protein)-type E3 ubiquitin ligase complex. Able to recognize and bind complex-type oligosaccharides. This Mus musculus (Mouse) protein is F-box only protein 27 (Fbxo27).